Reading from the N-terminus, the 344-residue chain is Phosphate acyltransferase (344 aa).

This sequence belongs to the PlsX family. Homodimer. Probably interacts with PlsY.

The protein resides in the cytoplasm. The catalysed reaction is a fatty acyl-[ACP] + phosphate = an acyl phosphate + holo-[ACP]. Its pathway is lipid metabolism; phospholipid metabolism. In terms of biological role, catalyzes the reversible formation of acyl-phosphate (acyl-PO(4)) from acyl-[acyl-carrier-protein] (acyl-ACP). This enzyme utilizes acyl-ACP as fatty acyl donor, but not acyl-CoA. The sequence is that of Phosphate acyltransferase from Sphingopyxis alaskensis (strain DSM 13593 / LMG 18877 / RB2256) (Sphingomonas alaskensis).